Consider the following 241-residue polypeptide: Peptidoglycan endopeptidase RipB (241 aa).

The signal sequence occupies residues 1 to 31; the sequence is MRHTRFHPIKLAWITAVVAGLMVGVATPADA. The NlpC/P60 domain occupies 109 to 241; the sequence is RQAVEYVIRR…TPFVTRIIEY (133 aa). Cys152 functions as the Nucleophile in the catalytic mechanism. His201 (proton acceptor) is an active-site residue. Residue Glu213 is part of the active site.

This sequence belongs to the peptidase C40 family. As to quaternary structure, monomer.

Peptidoglycan endopeptidase that cleaves the bond between D-glutamate and meso-diaminopimelate. Binds high-molecular weight peptidoglycan, but does not degrade it. Required for normal separation of daughter cells after cell division and cell wall integrity. Required for host cell invasion. The sequence is that of Peptidoglycan endopeptidase RipB (ripB) from Mycobacterium tuberculosis (strain CDC 1551 / Oshkosh).